We begin with the raw amino-acid sequence, 424 residues long: COUP transcription factor 1 (424 aa).

Residues 1-82 are disordered; sequence MAMVVSSWRD…QGPPGSGQSQ (82 aa). Residues 39–68 show a composition bias toward low complexity; that stretch reads EQQQQQAGSGAPHTPQTPGQPGAPATPGTA. The segment at residues 84-159 is a DNA-binding region (nuclear receptor); that stretch reads HIECVVCGDK…VGMRREAVQR (76 aa). NR C4-type zinc fingers lie at residues 87–107 and 123–147; these read CVVC…CEGC and CRAN…LKKC. The NR LBD domain occupies 185–411; the sequence is YLSGYISLLL…TLIRDMLLSG (227 aa).

It belongs to the nuclear hormone receptor family. NR2 subfamily. Binds DNA as dimer; homodimer and probable heterodimer with NR2F6. Interacts with GTF2B; this interaction is direct. Interacts with COPS2.

The protein resides in the nucleus. Functionally, coup (chicken ovalbumin upstream promoter) transcription factor binds to the ovalbumin promoter and, in conjunction with another protein (S300-II) stimulates initiation of transcription. Binds to both direct repeats and palindromes of the 5'-AGGTCA-3' motif. Represses transcriptional activity of LHCG. This is COUP transcription factor 1 (NR2F1) from Bos taurus (Bovine).